A 50-amino-acid chain; its full sequence is Large ribosomal subunit protein eL39 (50 aa).

Basic residues predominate over residues 1 to 12; the sequence is MGKKSKAKKKRL. The disordered stretch occupies residues 1 to 21; the sequence is MGKKSKAKKKRLGKLEKQNSR.

The protein belongs to the eukaryotic ribosomal protein eL39 family.

The polypeptide is Large ribosomal subunit protein eL39 (Haloquadratum walsbyi (strain DSM 16790 / HBSQ001)).